Consider the following 340-residue polypeptide: Aldo-keto reductase yakc [NADP(+)] (340 aa).

Tyr-56 acts as the Proton donor in catalysis. His-126 is a binding site for substrate. 208–218 (APLGRGFLTGA) contributes to the NADP(+) binding site.

This sequence belongs to the aldo/keto reductase family. Aldo/keto reductase 2 subfamily. As to quaternary structure, monomer.

The protein is Aldo-keto reductase yakc [NADP(+)] (yakc) of Schizosaccharomyces pombe (strain 972 / ATCC 24843) (Fission yeast).